The sequence spans 130 residues: Histone H2B.2 (130 aa).

The span at 1–19 (MAPKAEKKPASKAPAEKKP) shows a compositional bias: basic and acidic residues. Residues 1–38 (MAPKAEKKPASKAPAEKKPAAKKTASTDGAKKRTKARK) form a disordered region. 2 positions are modified to N6-acetyllysine; alternate: lysine 7 and lysine 8. Glycyl lysine isopeptide (Lys-Gly) (interchain with G-Cter in SUMO); alternate cross-links involve residues lysine 7 and lysine 8. The residue at position 11 (serine 11) is a Phosphoserine. Lysine 12 carries the post-translational modification N6-acetyllysine. Lysine 17 is subject to N6-acetyllysine; alternate. Lysine 17 is covalently cross-linked (Glycyl lysine isopeptide (Lys-Gly) (interchain with G-Cter in SUMO); alternate). Residue lysine 18 forms a Glycyl lysine isopeptide (Lys-Gly) (interchain with G-Cter in SUMO) linkage. Lysine 124 participates in a covalent cross-link: Glycyl lysine isopeptide (Lys-Gly) (interchain with G-Cter in ubiquitin).

Belongs to the histone H2B family. The nucleosome is a histone octamer containing two molecules each of H2A, H2B, H3 and H4 assembled in one H3-H4 heterotetramer and two H2A-H2B heterodimers. The octamer wraps approximately 147 bp of DNA. In terms of processing, monoubiquitinated by the UBC2-BRE1 complex to form H2BK123ub1. H2BK123ub1 gives a specific tag for epigenetic transcriptional activation and is also prerequisite for H3K4me and H3K79me formation. H2BK123ub1 also modulates the formation of double-strand breaks during meiosis and is a prerequisite for DNA-damage checkpoint activation. Post-translationally, phosphorylated by STE20 to form H2BS10ph during progression through meiotic prophase. May be correlated with chromosome condensation. Acetylated by GCN5 to form H2BK11ac and H2BK16ac. H2BK16ac can also be formed by ESA1. Acetylation of N-terminal lysines and particularly formation of H2BK11acK16ac has a positive effect on transcription. In terms of processing, sumoylation to form H2BK6su or H2BK7su, and probably also H2BK16su or H2BK17su, occurs preferentially near the telomeres and represses gene transcription.

The protein resides in the nucleus. The protein localises to the chromosome. Its function is as follows. Core component of nucleosome. Nucleosomes wrap and compact DNA into chromatin, limiting DNA accessibility to the cellular machineries which require DNA as a template. Histones thereby play a central role in transcription regulation, DNA repair, DNA replication and chromosomal stability. DNA accessibility is regulated via a complex set of post-translational modifications of histones, also called histone code, and nucleosome remodeling. This Candida albicans (strain SC5314 / ATCC MYA-2876) (Yeast) protein is Histone H2B.2 (HTB2).